Reading from the N-terminus, the 615-residue chain is MSKKFVHTQEELEKLSLKELENLAASMREKIIQVVSKNGGHLSSNLGAVELSIAMHLVFDAKKDPFIFDVSHQSYTHKLLSGKEEIFDTLRQINGLSGYTKPSEGDYFVAGHSSTSISLAVGACKAIALKGEKRIPVALIGDGALSAGMAYEALNELGDSKFPCVILLNDNEMSISKPIGAISKYLSQAMATQFYQSFKKRIAKMLDILPDSATYMAKRFEESFKLITPGLLFEELGLEYIGPIDGHNLGEIISALKQAKAMQKPCVIHAQTIKGKGYVLAEGKHAKWHGVGAFDIDSGESVKKSDTKKSATEIFSKNLLDLASKYENIVGVTAAMPSGTGLDKLIEKYPNRFWDVAIAEQHAVTSMAAMAKEGFKPFIAIYSTFLQRAYDQVIHDCAIMNLNVVFAMDRAGIVGEDGETHQGVFDLSFLAPLPNFTLLAPRDEQMMQNIMEYAYLHQGPIAFRYPRGSFILDKEFNPCEIKLGKAQWLVKNSSEIAFLGYGQGVAKAWQVLRALQEMNNNANLIDLIFAKPLDEELLCELAKKSKIWFIFSENVKIGGIESLINNFLQKYDLHVKVVSFEYEDKFIEHGKTSEVEKNLEKDVNSLLTKVLKFYH.

Thiamine diphosphate-binding positions include His-72 and 111-113; that span reads GHS. Mg(2+) is bound at residue Asp-142. Thiamine diphosphate-binding positions include 143-144, Asn-171, Tyr-278, and Glu-360; that span reads GA. Asn-171 contributes to the Mg(2+) binding site.

This sequence belongs to the transketolase family. DXPS subfamily. Homodimer. Mg(2+) is required as a cofactor. It depends on thiamine diphosphate as a cofactor.

It catalyses the reaction D-glyceraldehyde 3-phosphate + pyruvate + H(+) = 1-deoxy-D-xylulose 5-phosphate + CO2. It functions in the pathway metabolic intermediate biosynthesis; 1-deoxy-D-xylulose 5-phosphate biosynthesis; 1-deoxy-D-xylulose 5-phosphate from D-glyceraldehyde 3-phosphate and pyruvate: step 1/1. Catalyzes the acyloin condensation reaction between C atoms 2 and 3 of pyruvate and glyceraldehyde 3-phosphate to yield 1-deoxy-D-xylulose-5-phosphate (DXP). The protein is 1-deoxy-D-xylulose-5-phosphate synthase of Campylobacter jejuni (strain RM1221).